A 192-amino-acid polypeptide reads, in one-letter code: Potassium-transporting ATPase KdpC subunit (192 aa).

Residues 7–27 form a helical membrane-spanning segment; sequence PLIVIFAVLTAVTGLAYPAVM.

Belongs to the KdpC family. The system is composed of three essential subunits: KdpA, KdpB and KdpC.

The protein resides in the cell inner membrane. In terms of biological role, part of the high-affinity ATP-driven potassium transport (or Kdp) system, which catalyzes the hydrolysis of ATP coupled with the electrogenic transport of potassium into the cytoplasm. This subunit acts as a catalytic chaperone that increases the ATP-binding affinity of the ATP-hydrolyzing subunit KdpB by the formation of a transient KdpB/KdpC/ATP ternary complex. This chain is Potassium-transporting ATPase KdpC subunit, found in Paraburkholderia phytofirmans (strain DSM 17436 / LMG 22146 / PsJN) (Burkholderia phytofirmans).